The primary structure comprises 430 residues: MPYIESILAREVLDSRGNPTVEVEVYTESGAFGRAIVPSGASTGQYEAVELRDGDAQRFLGKGVLQAVKNVIEVIQPELEGYSVLEQTLIDKLLIKLDGTPNKSNLGANAILGVSLACAKAAANYLNLEFYQYVGGVLPKQMPVPMMNVINGGAHASNSVDFQEFMILPTGPTSFKEALRYGAEVFHHLGKILKQKGLPTTVGDEGGYAPDLNSNEEALQIILEAIKSAGYEPGKDIFLGMDVAASEFYDKKLQKYVLASENNKAFSSQELVHYYETLVSKYPIISIEDGLDENDWDGWKYLTQKLGNQIQLVGDDLFVTNTQKLAQGIENKIGNSILIKLNQIGTLTETLETIEMAKKASYTAVISHRSGETEDTTIADLAVATNAGQIKTGSCSRTDRMAKYNQLLRIEDQLVEAPFLGLKTFYNLKK.

Gln-163 is a (2R)-2-phosphoglycerate binding site. The Proton donor role is filled by Glu-205. Mg(2+)-binding residues include Asp-242, Glu-288, and Asp-315. Residues Lys-340, Arg-369, Ser-370, and Lys-391 each contribute to the (2R)-2-phosphoglycerate site. Lys-340 functions as the Proton acceptor in the catalytic mechanism.

Belongs to the enolase family. Mg(2+) serves as cofactor.

Its subcellular location is the cytoplasm. It localises to the secreted. The protein resides in the cell surface. It carries out the reaction (2R)-2-phosphoglycerate = phosphoenolpyruvate + H2O. Its pathway is carbohydrate degradation; glycolysis; pyruvate from D-glyceraldehyde 3-phosphate: step 4/5. Functionally, catalyzes the reversible conversion of 2-phosphoglycerate (2-PG) into phosphoenolpyruvate (PEP). It is essential for the degradation of carbohydrates via glycolysis. The polypeptide is Enolase (Onion yellows phytoplasma (strain OY-M)).